Here is a 174-residue protein sequence, read N- to C-terminus: uncharacterized protein (174 aa).

The protein to E.coli HemX C-terminal region.

This is an uncharacterized protein from Haemophilus influenzae (strain ATCC 51907 / DSM 11121 / KW20 / Rd).